A 257-amino-acid polypeptide reads, in one-letter code: MGACCSSRRNRSPSLAALAEETEVVLRCLAGRVVDLPGGDEVRIAPDVGRPGQNFGYFKFPGPSRFAYVKFIGRAYALGSGRKFLLYLSRNFQVFGYEDGTGLHMLAKSLHDFLKFKGLSDRDLVVVDSVALTSQLRPLTLPIRSTSDVETLVAEEATTNYTSTENLLGQTQSSTHRPLGVPLSNVKTMGVPPTKPSSQRPRGKGGRPPARLKSIREETVSGMARAREECNSPSEHDRLTSEMTDCDSDSSVSSVFF.

Over residues 163 to 176 the composition is skewed to polar residues; the sequence is STENLLGQTQSSTH. A disordered region spans residues 163 to 257; it reads STENLLGQTQ…SDSSVSSVFF (95 aa). A compositionally biased stretch (basic and acidic residues) spans 214–240; that stretch reads SIREETVSGMARAREECNSPSEHDRLT.

The protein is Gene 3 protein of Equine herpesvirus 1 (strain Ab4p) (EHV-1).